Here is a 24-residue protein sequence, read N- to C-terminus: Attacin (24 aa).

Belongs to the attacin/sarcotoxin-2 family.

The protein resides in the secreted. Hemolymph antibacterial protein. This chain is Attacin, found in Heliothis virescens (Tobacco budworm moth).